The chain runs to 182 residues: uncharacterized protein (182 aa).

The span at 1–23 (MILSDQNFLQTQWKEPQTAQSKN) shows a compositional bias: polar residues. The disordered stretch occupies residues 1–33 (MILSDQNFLQTQWKEPQTAQSKNTESKCEFHGN).

It belongs to the peptidase M24 family.

This is an uncharacterized protein from Caenorhabditis elegans.